Here is a 262-residue protein sequence, read N- to C-terminus: TLC domain-containing protein 4-B (262 aa).

The next 6 membrane-spanning stretches (helical) occupy residues Pro6 to Gly26, Thr53 to Asp73, Leu90 to Trp110, His122 to Gly142, Gly177 to Gly197, and Ala218 to Ala238. Residues Arg44–Tyr246 enclose the TLC domain.

Belongs to the TLCD4 family.

It is found in the membrane. In Xenopus laevis (African clawed frog), this protein is TLC domain-containing protein 4-B (tlcd4-b).